The primary structure comprises 355 residues: Peptide chain release factor 1 (355 aa).

Q234 carries the N5-methylglutamine modification.

This sequence belongs to the prokaryotic/mitochondrial release factor family. Methylated by PrmC. Methylation increases the termination efficiency of RF1.

Its subcellular location is the cytoplasm. Its function is as follows. Peptide chain release factor 1 directs the termination of translation in response to the peptide chain termination codons UAG and UAA. In Metamycoplasma arthritidis (strain 158L3-1) (Mycoplasma arthritidis), this protein is Peptide chain release factor 1.